Here is a 239-residue protein sequence, read N- to C-terminus: 1-(5-phosphoribosyl)-5-[(5-phosphoribosylamino)methylideneamino] imidazole-4-carboxamide isomerase (239 aa).

The active-site Proton acceptor is the Asp8. Asp130 acts as the Proton donor in catalysis.

The protein belongs to the HisA/HisF family.

It localises to the cytoplasm. The enzyme catalyses 1-(5-phospho-beta-D-ribosyl)-5-[(5-phospho-beta-D-ribosylamino)methylideneamino]imidazole-4-carboxamide = 5-[(5-phospho-1-deoxy-D-ribulos-1-ylimino)methylamino]-1-(5-phospho-beta-D-ribosyl)imidazole-4-carboxamide. Its pathway is amino-acid biosynthesis; L-histidine biosynthesis; L-histidine from 5-phospho-alpha-D-ribose 1-diphosphate: step 4/9. This chain is 1-(5-phosphoribosyl)-5-[(5-phosphoribosylamino)methylideneamino] imidazole-4-carboxamide isomerase, found in Lachnoclostridium phytofermentans (strain ATCC 700394 / DSM 18823 / ISDg) (Clostridium phytofermentans).